A 406-amino-acid chain; its full sequence is MSFPIERVRSEFPLLAREVNGQPLAYLDSAASAQKPQAVIDRELDFYRHGYAAVHRGIHTLSAEATQEMEAVREKVAAFINAGSAEEIIFVKGTTEGINLVANSFGRHFLQPGDSIIITEMEHHANIVPWQMLAQERGLNLRVWPLQPDGTLDLARLPGLIDASTKLLALTQVSNVLGTVNPVQEITAQAKAAGLKVLIDGAQAVMHQRVDVQALDCDFYVFSGHKLYGPSGIGILYGRQALLQQMPPWEGGGSMIQQVSLTAGTTYAEPPWRFEAGSPNTAGMMGLGAAIDYVNTLGLEAIGDYEQSLMHYALEALQQVPRLKIYGPAERAGVIAFNLGEHHAYDVGSFLDQYGIAIRTGHHCAMPLMAFYNVPSMCRASLALYNTRDEVDRLVAGLQRIQKLLG.

Position 226 is an N6-(pyridoxal phosphate)lysine (Lys-226). Cys-364 functions as the Cysteine persulfide intermediate in the catalytic mechanism.

Belongs to the class-V pyridoxal-phosphate-dependent aminotransferase family. Csd subfamily. Homodimer. Interacts with SufE and the SufBCD complex composed of SufB, SufC and SufD. The interaction with SufE is required to mediate the direct transfer of the sulfur atom from the S-sulfanylcysteine. Requires pyridoxal 5'-phosphate as cofactor.

The protein localises to the cytoplasm. The enzyme catalyses (sulfur carrier)-H + L-cysteine = (sulfur carrier)-SH + L-alanine. It carries out the reaction L-selenocysteine + AH2 = hydrogenselenide + L-alanine + A + H(+). Its pathway is cofactor biosynthesis; iron-sulfur cluster biosynthesis. Functionally, cysteine desulfurases mobilize the sulfur from L-cysteine to yield L-alanine, an essential step in sulfur metabolism for biosynthesis of a variety of sulfur-containing biomolecules. Component of the suf operon, which is activated and required under specific conditions such as oxidative stress and iron limitation. Acts as a potent selenocysteine lyase in vitro, that mobilizes selenium from L-selenocysteine. Selenocysteine lyase activity is however unsure in vivo. The polypeptide is Cysteine desulfurase (Serratia proteamaculans (strain 568)).